Reading from the N-terminus, the 244-residue chain is Diablo homolog, mitochondrial (244 aa).

The N-terminal 38 residues, 1-38 (MASLPRRLIWSFSYILRESFPIVSRRNCVSLLRASWRK), are a transit peptide targeting the mitochondrion. The IAP-binding signature appears at 50–54 (AIPVG). Residues 207–218 (DEIKRTITEDKG) are compositionally biased toward basic and acidic residues. Positions 207–244 (DEIKRTITEDKGNPPSGGSPRSSLSEEEEIPEAYLRED) are disordered. Residues 220–229 (PPSGGSPRSS) are compositionally biased toward low complexity.

Belongs to the Smac/DIABLO protein family. Homodimer.

It is found in the mitochondrion. In terms of biological role, promotes apoptosis. Acts by opposing the inhibitory activity of inhibitor of apoptosis proteins (IAP). In Xenopus tropicalis (Western clawed frog), this protein is Diablo homolog, mitochondrial.